Consider the following 465-residue polypeptide: Ras GTPase-activating protein-binding protein 1 (465 aa).

The 123-residue stretch at 11–133 (VGREFVRQYY…FYVHNDIFRY (123 aa)) folds into the NTF2 domain. Glycyl lysine isopeptide (Lys-Gly) (interchain with G-Cter in ubiquitin) cross-links involve residues K36, K50, K59, K64, K76, and K123. Positions 142-224 (VTEPQEESEE…EAALEEAAPD (83 aa)) are acidic disordered region. T143 carries the post-translational modification Phosphothreonine. The tract at residues 144–330 (EPQEESEEEV…GEPGDVEPRR (187 aa)) is disordered. Composition is skewed to acidic residues over residues 145–157 (PQEESEEEVEEPE) and 184–205 (EHLEEPVVEPEPEPEPEPEPEP). A Phosphoserine modification is found at S149. S231, S248, and S251 each carry phosphoserine. Positions 248–257 (SWASVTSKNL) are enriched in polar residues. Composition is skewed to basic and acidic residues over residues 295 to 305 (PQRDQRVREQR) and 316 to 330 (PIREAGEPGDVEPRR). Residues 338 to 413 (HQLFIGNLPH…VRLNVEEKKT (76 aa)) form the RRM domain. Glycyl lysine isopeptide (Lys-Gly) (interchain with G-Cter in ubiquitin) cross-links involve residues K351 and K355. S371 carries the post-translational modification Phosphoserine. Residue K374 forms a Glycyl lysine isopeptide (Lys-Gly) (interchain with G-Cter in ubiquitin) linkage. Residue K374 is modified to N6-acetyllysine; alternate. A Glycyl lysine isopeptide (Lys-Gly) (interchain with G-Cter in SUMO2); alternate cross-link involves residue K374. K391 participates in a covalent cross-link: Glycyl lysine isopeptide (Lys-Gly) (interchain with G-Cter in ubiquitin); alternate. Residues 408-464 (VEEKKTRAAREGDRRDNRLRGPGGPRGGPSGGMRGPPRGGMVQKPGFGVGRGITTPR) are RG-rich region. Residues 411 to 426 (KKTRAAREGDRRDNRL) show a composition bias toward basic and acidic residues. The interval 411–465 (KKTRAAREGDRRDNRLRGPGGPRGGPSGGMRGPPRGGMVQKPGFGVGRGITTPRQ) is disordered. Residue R427 is modified to Asymmetric dimethylarginine. The segment covering 428-445 (GPGGPRGGPSGGMRGPPR) has biased composition (gly residues). R433 is modified (asymmetric dimethylarginine; alternate). 4 positions are modified to omega-N-methylarginine; alternate: R433, R445, R458, and R464. Dimethylated arginine; alternate is present on R458.

Homodimer and oligomer. Component of a TAU mRNP complex, at least composed of IGF2BP1, ELAVL4 and G3BP1. Binds to the SH3 domain of Ras GTPase-activating protein (RASA1) in proliferating cells. No interaction in quiescent cells. Interacts (via NTF2 domain) with USP10; inhibiting stress granule formation by lowering G3BP1 valence. Interacts (via NTF2 domain) with CAPRIN1; promoting stress granule formation by lowering the saturation-concentration of G3BP1. Interacts (via NTF2 domain) with UBAP2L; promoting stress granule formation. Associates (via RG-rich region) with 40S ribosome subunits. Interacts with RPTOR and SPAG5; this complex is increased by oxidative stress. Interacts with ATXN2L. Interacts with STYXL1. Interacts with CGAS (via N-terminus); this interaction promotes the DNA-binding and activation of CGAS. Interacts (via C-terminus) with RIGI. Interacts with PABPC1. Interacts with QKI (isoforms QKI6 and QKI7); directing N(7)-methylguanine-containing mRNAs to stress granules. The cofactor is Mg(2+). In terms of processing, phosphorylation of the acidic disordered region regulates stress granule assembly. RASA1-dependent phosphorylation of Ser-149 induces a conformational change that prevents self-association. Dephosphorylation after HRAS activation is required for stress granule assembly. Ser-149 phosphorylation induces partial nuclear localization. Arg-435 is dimethylated, probably to asymmetric dimethylarginine. Post-translationally, ubiquitinated by TRIM21 via 'Lys-63'-linked polyubiquitination in the NTF2 domain in response to heat shock, leading to stress granule disassembly: ubiquitination promotes interaction with the FAF2 adapter, followed by interaction with VCP, which extracts G3BP1 from stress granules, leading to stress granule disassembly. In case of prolonged stress, ubiquitination by TRIM21 leads to autophagy-dependent degradation of G3BP1 via recruitment of ubiquitinated G3BP1 by SQSTM1 and/or CALCOCO2 to autophagosomes. In terms of tissue distribution, ubiquitous.

It is found in the cytoplasm. The protein resides in the cytosol. The protein localises to the perikaryon. Its subcellular location is the stress granule. It localises to the nucleus. The enzyme catalyses ATP + H2O = ADP + phosphate + H(+). Under physiological conditions, G3BP1 adopts a compact state that is stabilized by intramolecular interactions between the RG-rich and the acidic regions that inhibit phase separation. Upon stress, polysomes disassemble and mRNAs are released in an unfolded protein-free state. Binding of unfolded mRNA to G3BP1 outcompetes the intramolecular interactions and RNA-bound G3BP1 adopts an expanded conformation in which the RG-rich region becomes exposed to engage in protein-protein and protein-RNA interactions, allowing physical cross-linking of RNA molecules to form protein-RNA condensates, leading to liquid-liquid phase separation (LLPS). In terms of biological role, protein involved in various processes, such as stress granule formation and innate immunity. Plays an essential role in stress granule formation. Stress granules are membraneless compartments that store mRNAs and proteins, such as stalled translation pre-initiation complexes, in response to stress. Promotes formation of stress granules phase-separated membraneless compartment by undergoing liquid-liquid phase separation (LLPS) upon unfolded RNA-binding: functions as a molecular switch that triggers RNA-dependent LLPS in response to a rise in intracellular free RNA concentrations. Also acts as an ATP- and magnesium-dependent helicase: unwinds DNA/DNA, RNA/DNA, and RNA/RNA substrates with comparable efficiency. Acts unidirectionally by moving in the 5' to 3' direction along the bound single-stranded DNA. Unwinds preferentially partial DNA and RNA duplexes having a 17 bp annealed portion and either a hanging 3' tail or hanging tails at both 5'- and 3'-ends. Plays an essential role in innate immunity by promoting CGAS and RIGI activity. Participates in the DNA-triggered cGAS/STING pathway by promoting the DNA binding and activation of CGAS. Triggers the condensation of cGAS, a process probably linked to the formation of membrane-less organelles. Also enhances RIGI-induced type I interferon production probably by helping RIGI at sensing pathogenic RNA. May also act as a phosphorylation-dependent sequence-specific endoribonuclease in vitro: Cleaves exclusively between cytosine and adenine and cleaves MYC mRNA preferentially at the 3'-UTR. This is Ras GTPase-activating protein-binding protein 1 (G3bp1) from Mus musculus (Mouse).